A 217-amino-acid chain; its full sequence is Large ribosomal subunit protein uL1 (217 aa).

This sequence belongs to the universal ribosomal protein uL1 family.

The protein is Large ribosomal subunit protein uL1 (RPL10A) of Candida glabrata (strain ATCC 2001 / BCRC 20586 / JCM 3761 / NBRC 0622 / NRRL Y-65 / CBS 138) (Yeast).